Reading from the N-terminus, the 367-residue chain is MSDSQTLVVKLGTSVLTGGSRRLNRAHIVELVRQCAQLHAAGHRIVIVTSGAIAAGREHLGYPELPATIASKQLLAAVGQSRLIQLWEQLFSIYGIHVGQMLLTRADMEDRERFLNARDTLRALLDNNIVPVINENDAVATAEIKVGDNDNLSALAAILAGADKLLLLTDQKGLYTADPRSNPQAELIKDVYGIDDALRAIAGDSVSGLGTGGMSTKLQAADVACRAGIDTIIAAGSKPGVIGDVMEGISVGTLFHAQATPLENRKRWIFGAPPAGEITVDEGATAAILERGSSLLPKGIKSVTGNFSRGEVIRICNLEGRDIAHGVSRYNSDALRRIAGHHSQEIDAILGYEYGPVAVHRDDMITR.

Lys-10 is an ATP binding site. Positions 50, 137, and 149 each coordinate substrate. Residues 169–170 (TD) and 211–217 (TGGMSTK) contribute to the ATP site. A PUA domain is found at 275–353 (AGEITVDEGA…QEIDAILGYE (79 aa)).

Belongs to the glutamate 5-kinase family.

Its subcellular location is the cytoplasm. The enzyme catalyses L-glutamate + ATP = L-glutamyl 5-phosphate + ADP. The protein operates within amino-acid biosynthesis; L-proline biosynthesis; L-glutamate 5-semialdehyde from L-glutamate: step 1/2. Catalyzes the transfer of a phosphate group to glutamate to form L-glutamate 5-phosphate. The polypeptide is Glutamate 5-kinase (Escherichia coli O81 (strain ED1a)).